The following is a 491-amino-acid chain: UDP-N-acetylmuramate--L-alanine ligase (491 aa).

126–132 (GTHGKTT) is a binding site for ATP.

This sequence belongs to the MurCDEF family.

The protein localises to the cytoplasm. It carries out the reaction UDP-N-acetyl-alpha-D-muramate + L-alanine + ATP = UDP-N-acetyl-alpha-D-muramoyl-L-alanine + ADP + phosphate + H(+). The protein operates within cell wall biogenesis; peptidoglycan biosynthesis. In terms of biological role, cell wall formation. The polypeptide is UDP-N-acetylmuramate--L-alanine ligase (Salmonella paratyphi C (strain RKS4594)).